The following is a 265-amino-acid chain: 5'-nucleotidase SurE (265 aa).

A divalent metal cation-binding residues include aspartate 8, aspartate 9, serine 39, and asparagine 96.

The protein belongs to the SurE nucleotidase family. A divalent metal cation is required as a cofactor.

It is found in the cytoplasm. It catalyses the reaction a ribonucleoside 5'-phosphate + H2O = a ribonucleoside + phosphate. Functionally, nucleotidase that shows phosphatase activity on nucleoside 5'-monophosphates. This Rubrobacter xylanophilus (strain DSM 9941 / JCM 11954 / NBRC 16129 / PRD-1) protein is 5'-nucleotidase SurE.